Here is a 164-residue protein sequence, read N- to C-terminus: NADH-quinone oxidoreductase subunit I 1 (164 aa).

4Fe-4S ferredoxin-type domains lie at 54 to 84 and 95 to 124; these read LRRY…IEAG and VRYD…EGPN. [4Fe-4S] cluster-binding residues include C64, C67, C70, C74, C104, C107, C110, and C114.

This sequence belongs to the complex I 23 kDa subunit family. NDH-1 is composed of 14 different subunits. Subunits NuoA, H, J, K, L, M, N constitute the membrane sector of the complex. [4Fe-4S] cluster is required as a cofactor.

It localises to the cell inner membrane. It catalyses the reaction a quinone + NADH + 5 H(+)(in) = a quinol + NAD(+) + 4 H(+)(out). In terms of biological role, NDH-1 shuttles electrons from NADH, via FMN and iron-sulfur (Fe-S) centers, to quinones in the respiratory chain. The immediate electron acceptor for the enzyme in this species is believed to be ubiquinone. Couples the redox reaction to proton translocation (for every two electrons transferred, four hydrogen ions are translocated across the cytoplasmic membrane), and thus conserves the redox energy in a proton gradient. The protein is NADH-quinone oxidoreductase subunit I 1 of Rhizobium meliloti (strain 1021) (Ensifer meliloti).